The primary structure comprises 324 residues: dITP/XTP pyrophosphatase (324 aa).

Positions 1 to 126 (MTKSIFEYKD…SDNKSDFGDV (126 aa)) are unknown. Residues 127-324 (LLIATRNEGK…EVFPAWQNKQ (198 aa)) are NTP pyrophosphatase. 131 to 136 (TRNEGK) contributes to the substrate binding site. The active-site Proton acceptor is aspartate 193. Aspartate 193 contacts Mg(2+). Substrate is bound by residues serine 194, 277 to 280 (FGYD), lysine 300, and 305 to 306 (HR).

Belongs to the HAM1 NTPase family. Homodimer. Mg(2+) is required as a cofactor.

It carries out the reaction XTP + H2O = XMP + diphosphate + H(+). The enzyme catalyses dITP + H2O = dIMP + diphosphate + H(+). The catalysed reaction is ITP + H2O = IMP + diphosphate + H(+). In terms of biological role, pyrophosphatase that catalyzes the hydrolysis of nucleoside triphosphates to their monophosphate derivatives, with a high preference for the non-canonical purine nucleotides XTP (xanthosine triphosphate), dITP (deoxyinosine triphosphate) and ITP. Seems to function as a house-cleaning enzyme that removes non-canonical purine nucleotides from the nucleotide pool, thus preventing their incorporation into DNA/RNA and avoiding chromosomal lesions. The chain is dITP/XTP pyrophosphatase from Streptococcus thermophilus (strain ATCC BAA-250 / LMG 18311).